A 562-amino-acid chain; its full sequence is NAD-dependent malic enzyme (562 aa).

Tyr101 acts as the Proton donor in catalysis. Arg154 serves as a coordination point for NAD(+). Lys172 acts as the Proton acceptor in catalysis. 3 residues coordinate a divalent metal cation: Glu243, Asp244, and Asp267. 2 residues coordinate NAD(+): Asp267 and Asn415.

This sequence belongs to the malic enzymes family. As to quaternary structure, homotetramer. Mg(2+) is required as a cofactor. Requires Mn(2+) as cofactor.

It catalyses the reaction (S)-malate + NAD(+) = pyruvate + CO2 + NADH. It carries out the reaction oxaloacetate + H(+) = pyruvate + CO2. In Shewanella baltica (strain OS155 / ATCC BAA-1091), this protein is NAD-dependent malic enzyme.